Consider the following 382-residue polypeptide: MPLIAISYSHGKLSILNQLFLPHQTTYDPIYSACDAWHAIHDMRVRGAPAIAIVAALSLAVELYDLIQKGKLSDQAKEVEIFIREKLEYIASSRPTAVNLVEAAGRLGKIVVARSCGEGVTGREVAEEYIRAAEKMLEDDVKDNRGIGEFGAKWIMKQAIDGAEGKGKVAVLTHCNTGSLATAGYGTALGVIRSLHAANSLKHAYCTETRPYNQGSRLTAYELVHDNIPATLITDSMAAALLAHKSAGVGAIVVGADRVAANGDTANKIGTYGLAVLAKHHGVKFLVAAPRTTIDMNTKSGEGIAIEERPRQEMTRIRGPRVGGEQDGLGAMETITVAADGIDVWNPAFDVTPASLIDGIITEIGVVEKDRDGEFHLERVFE.

Catalysis depends on aspartate 257, which acts as the Proton donor.

Belongs to the eIF-2B alpha/beta/delta subunits family. MtnA subfamily.

The protein resides in the cytoplasm. It is found in the nucleus. The enzyme catalyses 5-(methylsulfanyl)-alpha-D-ribose 1-phosphate = 5-(methylsulfanyl)-D-ribulose 1-phosphate. Its pathway is amino-acid biosynthesis; L-methionine biosynthesis via salvage pathway; L-methionine from S-methyl-5-thio-alpha-D-ribose 1-phosphate: step 1/6. In terms of biological role, catalyzes the interconversion of methylthioribose-1-phosphate (MTR-1-P) into methylthioribulose-1-phosphate (MTRu-1-P). The polypeptide is Methylthioribose-1-phosphate isomerase (Paracoccidioides brasiliensis (strain Pb18)).